The chain runs to 425 residues: Serine--tRNA ligase (425 aa).

Residue 230 to 232 participates in L-serine binding; that stretch reads TAE. 261-263 serves as a coordination point for ATP; the sequence is RSE. E284 is an L-serine binding site. 348-351 provides a ligand contact to ATP; the sequence is EISS. Position 384 (S384) interacts with L-serine.

This sequence belongs to the class-II aminoacyl-tRNA synthetase family. Type-1 seryl-tRNA synthetase subfamily. In terms of assembly, homodimer. The tRNA molecule binds across the dimer.

It is found in the cytoplasm. It carries out the reaction tRNA(Ser) + L-serine + ATP = L-seryl-tRNA(Ser) + AMP + diphosphate + H(+). It catalyses the reaction tRNA(Sec) + L-serine + ATP = L-seryl-tRNA(Sec) + AMP + diphosphate + H(+). It participates in aminoacyl-tRNA biosynthesis; selenocysteinyl-tRNA(Sec) biosynthesis; L-seryl-tRNA(Sec) from L-serine and tRNA(Sec): step 1/1. In terms of biological role, catalyzes the attachment of serine to tRNA(Ser). Is also able to aminoacylate tRNA(Sec) with serine, to form the misacylated tRNA L-seryl-tRNA(Sec), which will be further converted into selenocysteinyl-tRNA(Sec). This Streptococcus pyogenes serotype M28 (strain MGAS6180) protein is Serine--tRNA ligase.